Here is a 493-residue protein sequence, read N- to C-terminus: Transcript termination protein A18 (493 aa).

Positions 100 to 256 (MIELKRPLYI…NSIINIAKLS (157 aa)) constitute a Helicase ATP-binding domain. ATP is bound at residue 113–120 (LACGFGKT). The DESH box signature appears at 206 to 209 (DESH).

It belongs to the helicase family. Poxviruses subfamily. In terms of assembly, interacts with G2. Might be part of a transcription complex composed at least of G2, A18, and H5.

Its subcellular location is the virion. Its function is as follows. DNA helicase which seems to act as a postreplicative transcription termination factor. Involved in ATP-dependent release of nascent RNA. Forms a stable complex with single-stranded DNA, and to a lesser extent RNA. The chain is Transcript termination protein A18 from Cowpox virus (strain GRI-90 / Grishak) (CPV).